The following is a 341-amino-acid chain: UDP-3-O-acylglucosamine N-acyltransferase 2 (341 aa).

Histidine 254 functions as the Proton acceptor in the catalytic mechanism.

The protein belongs to the transferase hexapeptide repeat family. LpxD subfamily. In terms of assembly, homotrimer.

The enzyme catalyses a UDP-3-O-[(3R)-3-hydroxyacyl]-alpha-D-glucosamine + a (3R)-hydroxyacyl-[ACP] = a UDP-2-N,3-O-bis[(3R)-3-hydroxyacyl]-alpha-D-glucosamine + holo-[ACP] + H(+). It functions in the pathway bacterial outer membrane biogenesis; LPS lipid A biosynthesis. Catalyzes the N-acylation of UDP-3-O-acylglucosamine using 3-hydroxyacyl-ACP as the acyl donor. Is involved in the biosynthesis of lipid A, a phosphorylated glycolipid that anchors the lipopolysaccharide to the outer membrane of the cell. The chain is UDP-3-O-acylglucosamine N-acyltransferase 2 from Nitrobacter winogradskyi (strain ATCC 25391 / DSM 10237 / CIP 104748 / NCIMB 11846 / Nb-255).